Here is a 50-residue protein sequence, read N- to C-terminus: Large ribosomal subunit protein bL33A (50 aa).

The protein belongs to the bacterial ribosomal protein bL33 family.

This Streptococcus thermophilus (strain CNRZ 1066) protein is Large ribosomal subunit protein bL33A.